Here is an 801-residue protein sequence, read N- to C-terminus: PR domain zinc finger protein 4 (801 aa).

Residues 412-529 (KQLVLRQSIV…PENELLFYYS (118 aa)) enclose the SET domain. The C2H2-type 1; atypical zinc finger occupies 545 to 566 (HLCNCGKECNSYTEFKAHLTSH). 4 consecutive C2H2-type zinc fingers follow at residues 618 to 640 (HKCD…LKIH), 646 to 668 (YRCT…MVIH), 674 to 696 (LKCD…VLIH), and 702 to 724 (IKCP…LNSH). A C2H2-type 6; atypical zinc finger spans residues 730-752 (YVCEKCTKAYLTKYHLTRHLKTC). The segment at 751–782 (TCKGPTSSSSAPEEEEEDDSEEEDLADSVGTE) is disordered. Over residues 762–776 (PEEEEEDDSEEEDLA) the composition is skewed to acidic residues.

The protein belongs to the class V-like SAM-binding methyltransferase superfamily.

It localises to the nucleus. Functionally, may function as a transcription factor involved in cell differentiation. The protein is PR domain zinc finger protein 4 (PRDM4) of Pongo abelii (Sumatran orangutan).